We begin with the raw amino-acid sequence, 542 residues long: MVVSREEVREIIGRGNAIVIYEDHLLNLNGWLERHPGGEKAIHHMIGRDASDEMNAYHDPETVKTFKRWSIGRVKLPWDNLVPPIQGGNYSFDKVDQRVIYKKLGIFPGVKIEPKVQENIVLTEKSASKLLPVGGVRDPKTIIEDFDNKLVYEDIKQIPSLDHETQRNLSLQYNELHQTIINRGYYQCDYWQYFKEFCRISSLFLLFVLFLRSKWYTLSAISIGLMWQQLVFIAHDAGHISITHNYQIDNIIGIIIANFIGGLSLGWWKRNHNVHHLVTNDPVHDPDIQHLPFFAVSSRLLGNVFSTYYEKYLWFDKIAQKMLQIQHKLYYPILSFGRFNLYRLSWSHLIMGLGPRKGKAAWFRYLELIGLCFFSYWFFYKTMSYIPTKTLRFWFLLISHWTTMIVHVQIVLSHFAMSTSDLGSTESFVSRQLRTTMDVDCPEWFDFFHGGLQFQAIHHLFPRLPRHNFRKVQPLVIEFCKNTGLHYSIYGFVDGNGKVVNKMADVASQVVILNDCLHSIHLENTTGKNLYEAKVESVSIKG.

The Cytochrome b5 heme-binding domain maps to 1 to 75 (MVVSREEVRE…FKRWSIGRVK (75 aa)). Heme-binding residues include His35 and His58. The next 2 helical transmembrane spans lie at 215–235 (WYTL…FIAH) and 248–268 (IDNI…LGWW). The Histidine box-1 motif lies at 235 to 239 (HDAGH). A Histidine box-2 motif is present at residues 272 to 276 (HNVHH). 3 helical membrane-spanning segments follow: residues 329–346 (LYYP…RLSW), 360–380 (AAWF…WFFY), and 393–413 (FWFL…IVLS). The short motif at 455 to 459 (QAIHH) is the Histidine box-3 element.

The protein belongs to the fatty acid desaturase type 1 family.

It is found in the membrane. The catalysed reaction is an N-acylsphing-4-enine + 2 Fe(II)-[cytochrome b5] + O2 + 2 H(+) = a (4E,8E)-4-sphinga-4,8-dienine ceramide + 2 Fe(III)-[cytochrome b5] + 2 H2O. Its pathway is lipid metabolism; sphingolipid metabolism. Its function is as follows. Delta(8)-fatty-acid desaturase which introduces a double bond at the 8-position in the long-chain base (LCB) of ceramides. Required for the formation of the di-unsaturated sphingoid base (E,E)-sphinga-4,8-dienine during glucosylceramide (GluCer) biosynthesis. The polypeptide is Delta 8-(E)-sphingolipid desaturase (Komagataella phaffii (strain GS115 / ATCC 20864) (Yeast)).